Consider the following 411-residue polypeptide: LL-diaminopimelate aminotransferase (411 aa).

2 residues coordinate substrate: tyrosine 15 and glycine 42. Residues tyrosine 72, 108 to 109, tyrosine 132, asparagine 187, tyrosine 218, and 246 to 248 each bind pyridoxal 5'-phosphate; these read AK and SFS. Positions 109, 132, and 187 each coordinate substrate. N6-(pyridoxal phosphate)lysine is present on lysine 249. Residues arginine 257 and asparagine 292 each contribute to the pyridoxal 5'-phosphate site. 2 residues coordinate substrate: asparagine 292 and arginine 388.

The protein belongs to the class-I pyridoxal-phosphate-dependent aminotransferase family. LL-diaminopimelate aminotransferase subfamily. Homodimer. Requires pyridoxal 5'-phosphate as cofactor.

It carries out the reaction (2S,6S)-2,6-diaminopimelate + 2-oxoglutarate = (S)-2,3,4,5-tetrahydrodipicolinate + L-glutamate + H2O + H(+). It participates in amino-acid biosynthesis; L-lysine biosynthesis via DAP pathway; LL-2,6-diaminopimelate from (S)-tetrahydrodipicolinate (aminotransferase route): step 1/1. In terms of biological role, involved in the synthesis of meso-diaminopimelate (m-DAP or DL-DAP), required for both lysine and peptidoglycan biosynthesis. Catalyzes the direct conversion of tetrahydrodipicolinate to LL-diaminopimelate. The sequence is that of LL-diaminopimelate aminotransferase from Crocosphaera subtropica (strain ATCC 51142 / BH68) (Cyanothece sp. (strain ATCC 51142)).